Reading from the N-terminus, the 557-residue chain is Phosphomethylpyrimidine synthase (557 aa).

Substrate contacts are provided by residues N197, M226, Y255, H291, S311–G313, D352–R355, and E391. H395 is a Zn(2+) binding site. Position 418 (Y418) interacts with substrate. H459 is a Zn(2+) binding site. [4Fe-4S] cluster is bound by residues C539, C542, and C547.

This sequence belongs to the ThiC family. As to quaternary structure, homodimer. [4Fe-4S] cluster serves as cofactor.

The catalysed reaction is 5-amino-1-(5-phospho-beta-D-ribosyl)imidazole + S-adenosyl-L-methionine = 4-amino-2-methyl-5-(phosphooxymethyl)pyrimidine + CO + 5'-deoxyadenosine + formate + L-methionine + 3 H(+). The protein operates within cofactor biosynthesis; thiamine diphosphate biosynthesis. Its function is as follows. Catalyzes the synthesis of the hydroxymethylpyrimidine phosphate (HMP-P) moiety of thiamine from aminoimidazole ribotide (AIR) in a radical S-adenosyl-L-methionine (SAM)-dependent reaction. The polypeptide is Phosphomethylpyrimidine synthase (Anaplasma phagocytophilum (strain HZ)).